We begin with the raw amino-acid sequence, 49 residues long: Delta-actitoxin-Axm1a (49 aa).

3 disulfides stabilise this stretch: Cys-4/Cys-46, Cys-6/Cys-36, and Cys-29/Cys-47.

Belongs to the sea anemone sodium channel inhibitory toxin family. Type I subfamily.

The protein localises to the secreted. It localises to the nematocyst. Binds specifically to voltage-gated sodium channels (Nav) (site 3), thereby delaying their inactivation. This toxin retains the greatest capacity to discriminate between the cardiac (Nav1.5/SCN5A) and neuronal sodium channels (2.5 nM versus 120 nM, when electrophysiologically tested and 14 nM versus 400 nM, when tested by ion flux), whereas its paralog Anthopleurin-B has the highest affinity of all anemone toxins for the mammalian sodium channel. Its ability to differentiate between cardiac and skeletal channels appears to be associated with domain 4 of the channel. This toxin does not slow or inhibit closed-state inactivation of cardiac sodium channels, but selectively modifies inactivation from the open-state. It does not display phospholipid-binding activities, suggesting that the domain IV S3-S4 linker is located at the extracellular surface and not buried in the phospholipid bilayer. The sequence is that of Delta-actitoxin-Axm1a from Anthopleura xanthogrammica (Giant green sea anemone).